Here is a 390-residue protein sequence, read N- to C-terminus: Succinate--CoA ligase [ADP-forming] subunit beta (390 aa).

The ATP-grasp domain maps to 9 to 244 (KEIFREYGVP…LSEEDPVEVE (236 aa)). ATP contacts are provided by residues lysine 46, 53-55 (GRG), glutamate 99, alanine 102, and glutamate 107. Residues asparagine 199 and aspartate 213 each contribute to the Mg(2+) site. Residues asparagine 264 and 321 to 323 (GIV) contribute to the substrate site.

Belongs to the succinate/malate CoA ligase beta subunit family. As to quaternary structure, heterotetramer of two alpha and two beta subunits. The cofactor is Mg(2+).

It catalyses the reaction succinate + ATP + CoA = succinyl-CoA + ADP + phosphate. It carries out the reaction GTP + succinate + CoA = succinyl-CoA + GDP + phosphate. The protein operates within carbohydrate metabolism; tricarboxylic acid cycle; succinate from succinyl-CoA (ligase route): step 1/1. Functionally, succinyl-CoA synthetase functions in the citric acid cycle (TCA), coupling the hydrolysis of succinyl-CoA to the synthesis of either ATP or GTP and thus represents the only step of substrate-level phosphorylation in the TCA. The beta subunit provides nucleotide specificity of the enzyme and binds the substrate succinate, while the binding sites for coenzyme A and phosphate are found in the alpha subunit. This chain is Succinate--CoA ligase [ADP-forming] subunit beta, found in Nitratiruptor sp. (strain SB155-2).